Here is a 469-residue protein sequence, read N- to C-terminus: MDVENEQILNVNPTDPDNLSDSLFSGDEENAGTEEIKNEINGNWISASTINEARINAKAKRRLRKNSSRDSGRGDSVSDNGSEAVRSGVAVPTSPKGRLLDRRSRSGKGRGLPKKGGAGGKGVWGTPGQVYDVEEVDVKDPNYDDDQENCVYETVVLPLDETAFEKTLTPIIQEYFEHGDTNEVAEMLRDLNLGEMKSGVPVLAVSLALEGKASHREMTSKLLSDLCGTVMSTNDVEKSFDKLLKDLPELALDTPRAPQLVGQFIARAVGDGILCNTYIDSYKGTVDCVQARAALDKATVLLSMSKGGKRKDSVWGSGGGQQPVNHLVKEIDMLLKEYLLSGDMSEAEHCLKELEVPHFHHELVYEAIVMVLESTGESAFKMMLDLLKSLWKSSTITIDQMKRGYERIYNEIPDINLDVPHSYSVLERFVEECFQAGIISKQLRDLCPSRGRKRFVSEGDGGRLKPESY.

Met1 bears the N-acetylmethionine mark. Disordered stretches follow at residues Met1–Asn30 and Lys58–Gly128. Positions Gln7–Leu23 are enriched in polar residues. Ser25 bears the Phosphoserine mark. The Nuclear localization signal signature appears at Lys58 to Arg64. Residue Ser67 is modified to Phosphoserine; by PKB and RPS6KB1. Phosphoserine is present on residues Ser68, Ser71, Ser76, Ser78, and Ser94. The Phosphodegron signature appears at Asp70–Ser76. Residues Lys114 to Gly125 are compositionally biased toward gly residues. A Phosphotyrosine modification is found at Tyr152. The MI 1 domain occupies Ala163–Gly284. Phosphoserine occurs at positions 313 and 317. One can recognise an MI 2 domain in the interval His326–Ser449. A Nuclear localization signal motif is present at residues Pro448–Arg454. Residue Ser457 is modified to Phosphoserine.

Belongs to the PDCD4 family. Interacts (via MI domains) with EIF4A2. Interacts (via MI domains) with EIF4A1 (via N-terminal domain). Heterotrimer with EIF4A1; one molecule of PDCD4 binds two molecules of EIF4A1. Interacts with EIF4G1. May form a complex with EIF4A1 and EIF4G1. The interaction between PDCD4 and EIF4A1 interferes with the interaction between EIF4A1 and EIF4G. When phosphorylated, interacts with BTRC and FBXW11. Post-translationally, polyubiquitinated, leading to its proteasomal degradation. Rapidly degraded in response to mitogens. Phosphorylation of the phosphodegron promotes interaction with BTRC and proteasomal degradation. In terms of processing, phosphorylated at Ser-67 by RPS6KB1 in response to mitogens; phosphorylation promotes proteasomal degradation of PDCD4.

Its subcellular location is the nucleus. The protein resides in the cytoplasm. Inhibits translation initiation and cap-dependent translation. May excert its function by hindering the interaction between EIF4A1 and EIF4G. Inhibits the helicase activity of EIF4A. Modulates the activation of JUN kinase. Down-regulates the expression of MAP4K1, thus inhibiting events important in driving invasion, namely, MAPK85 activation and consequent JUN-dependent transcription. May play a role in apoptosis. Tumor suppressor. Inhibits tumor promoter-induced neoplastic transformation. Binds RNA. The polypeptide is Programmed cell death protein 4 (Pdcd4) (Rattus norvegicus (Rat)).